A 271-amino-acid polypeptide reads, in one-letter code: Aquaporin-2 (271 aa).

Residues 1 to 11 (MWELRSIAFSR) lie on the Cytoplasmic side of the membrane. The helical transmembrane segment at 12–32 (AVLAEFLATLLFVFFGLGSAL) threads the bilayer. The Extracellular portion of the chain corresponds to 33 to 40 (NWPQALPS). The helical transmembrane segment at 41 to 59 (VLQIAMAFGLAIGTLVQAL) threads the bilayer. Topologically, residues 60 to 64 (GHVSG) are cytoplasmic. Residues 65 to 74 (AHINPAVTVA) constitute an intramembrane region (discontinuously helical). The NPA 1 motif lies at 68 to 70 (NPA). Topologically, residues 75 to 85 (CLVGCHVSFLR) are cytoplasmic. The helical transmembrane segment at 86-107 (AVFYVAAQLLGAVAGAALLHEI) threads the bilayer. Residues 108–127 (TPPAIRGDLAVNALNNNSTA) are Extracellular-facing. N123 and N124 each carry an N-linked (GlcNAc...) asparagine glycan. Residues 128-148 (GQAVTVELFLTLQLVLCIFPS) form a helical membrane-spanning segment. The Cytoplasmic portion of the chain corresponds to 149–156 (TDKRRGKQ). The helical transmembrane segment at 157-176 (LGHPALSIGFSVALGHLLGI) threads the bilayer. Over 177-180 (HYTG) the chain is Extracellular. Positions 181-193 (CSMNPARSLAPAI) form an intramembrane region, discontinuously helical. The NPA 2 motif lies at 184–186 (NPA). Over 194 to 201 (VTGKFDDH) the chain is Extracellular. A helical transmembrane segment spans residues 202-222 (WVFWIGPLVGAIVASLLYNYV). Residues 223–271 (LFPPAKSLSERLAVLKGLEPDTDWEEREVRRRQSVELHSPQSLPRGTKA) lie on the Cytoplasmic side of the membrane. The disordered stretch occupies residues 249–271 (REVRRRQSVELHSPQSLPRGTKA). Position 256 is a phosphoserine (S256). The segment covering 261–271 (SPQSLPRGTKA) has biased composition (polar residues).

The protein belongs to the MIP/aquaporin (TC 1.A.8) family. As to quaternary structure, homotetramer. Post-translationally, ser-256 phosphorylation is necessary and sufficient for expression at the apical membrane. Endocytosis is not phosphorylation-dependent. N-glycosylated. In terms of tissue distribution, expressed in renal collecting tubules.

It is found in the apical cell membrane. It localises to the basolateral cell membrane. Its subcellular location is the cell membrane. The protein localises to the cytoplasmic vesicle membrane. The protein resides in the golgi apparatus. It is found in the trans-Golgi network membrane. The catalysed reaction is H2O(in) = H2O(out). It carries out the reaction glycerol(in) = glycerol(out). Its function is as follows. Forms a water-specific channel that provides the plasma membranes of renal collecting duct with high permeability to water, thereby permitting water to move in the direction of an osmotic gradient. Could also be permeable to glycerol. The chain is Aquaporin-2 from Ovis aries (Sheep).